We begin with the raw amino-acid sequence, 381 residues long: Cobalt-precorrin-5B C(1)-methyltransferase (381 aa).

Belongs to the CbiD family.

It catalyses the reaction Co-precorrin-5B + S-adenosyl-L-methionine = Co-precorrin-6A + S-adenosyl-L-homocysteine. Its pathway is cofactor biosynthesis; adenosylcobalamin biosynthesis; cob(II)yrinate a,c-diamide from sirohydrochlorin (anaerobic route): step 6/10. Catalyzes the methylation of C-1 in cobalt-precorrin-5B to form cobalt-precorrin-6A. In Clostridium botulinum (strain Eklund 17B / Type B), this protein is Cobalt-precorrin-5B C(1)-methyltransferase.